The sequence spans 351 residues: Dihydroorotate dehydrogenase (quinone) (351 aa).

FMN contacts are provided by residues Ala-67 to Lys-71 and Thr-91. Lys-71 contacts substrate. Residue Asn-116 to Phe-120 participates in substrate binding. FMN is bound by residues Asn-145 and Asn-178. A substrate-binding site is contributed by Asn-178. The Nucleophile role is filled by Ser-181. Asn-183 provides a ligand contact to substrate. Residues Lys-214 and Thr-242 each contribute to the FMN site. Asn-243–Thr-244 serves as a coordination point for substrate. Residues Gly-262, Gly-291, and Tyr-312 to Ser-313 contribute to the FMN site.

Belongs to the dihydroorotate dehydrogenase family. Type 2 subfamily. As to quaternary structure, monomer. FMN serves as cofactor.

It localises to the cell membrane. It catalyses the reaction (S)-dihydroorotate + a quinone = orotate + a quinol. Its pathway is pyrimidine metabolism; UMP biosynthesis via de novo pathway; orotate from (S)-dihydroorotate (quinone route): step 1/1. Its function is as follows. Catalyzes the conversion of dihydroorotate to orotate with quinone as electron acceptor. This chain is Dihydroorotate dehydrogenase (quinone), found in Helicobacter pylori (strain G27).